Reading from the N-terminus, the 196-residue chain is Nucleoid occlusion factor SlmA (196 aa).

An HTH tetR-type domain is found at 6–66 (RNRREEILQA…GLIEFVEDTL (61 aa)). Positions 29 to 48 (TTAKLAANLGVSEAALYRHF) form a DNA-binding region, H-T-H motif. The stretch at 108 to 135 (DALMGEHDRLRGRMEDLFNRIESSIKQI) forms a coiled coil.

It belongs to the nucleoid occlusion factor SlmA family. As to quaternary structure, homodimer. Interacts with FtsZ.

The protein localises to the cytoplasm. The protein resides in the nucleoid. Functionally, required for nucleoid occlusion (NO) phenomenon, which prevents Z-ring formation and cell division over the nucleoid. Acts as a DNA-associated cell division inhibitor that binds simultaneously chromosomal DNA and FtsZ, and disrupts the assembly of FtsZ polymers. SlmA-DNA-binding sequences (SBS) are dispersed on non-Ter regions of the chromosome, preventing FtsZ polymerization at these regions. The sequence is that of Nucleoid occlusion factor SlmA from Idiomarina loihiensis (strain ATCC BAA-735 / DSM 15497 / L2-TR).